The sequence spans 140 residues: Organic hydroperoxide resistance protein-like (140 aa).

It belongs to the OsmC/Ohr family.

In Mycoplasma genitalium (strain ATCC 33530 / DSM 19775 / NCTC 10195 / G37) (Mycoplasmoides genitalium), this protein is Organic hydroperoxide resistance protein-like.